The chain runs to 156 residues: ATP synthase subunit b (156 aa).

The chain crosses the membrane as a helical span at residues 7-27 (LIGQTIAFIVFVWFCMKFVWP).

This sequence belongs to the ATPase B chain family. In terms of assembly, F-type ATPases have 2 components, F(1) - the catalytic core - and F(0) - the membrane proton channel. F(1) has five subunits: alpha(3), beta(3), gamma(1), delta(1), epsilon(1). F(0) has three main subunits: a(1), b(2) and c(10-14). The alpha and beta chains form an alternating ring which encloses part of the gamma chain. F(1) is attached to F(0) by a central stalk formed by the gamma and epsilon chains, while a peripheral stalk is formed by the delta and b chains.

It localises to the cell inner membrane. Functionally, f(1)F(0) ATP synthase produces ATP from ADP in the presence of a proton or sodium gradient. F-type ATPases consist of two structural domains, F(1) containing the extramembraneous catalytic core and F(0) containing the membrane proton channel, linked together by a central stalk and a peripheral stalk. During catalysis, ATP synthesis in the catalytic domain of F(1) is coupled via a rotary mechanism of the central stalk subunits to proton translocation. In terms of biological role, component of the F(0) channel, it forms part of the peripheral stalk, linking F(1) to F(0). The chain is ATP synthase subunit b from Idiomarina loihiensis (strain ATCC BAA-735 / DSM 15497 / L2-TR).